A 323-amino-acid chain; its full sequence is DNA-directed RNA polymerase subunit alpha (323 aa).

Residues 1–233 form an alpha N-terminal domain (alpha-NTD) region; it reads MGQEKVTVST…DLFIPFFHAE (233 aa). Residues 264–323 are alpha C-terminal domain (alpha-CTD); it reads IALKYIYIDQSELPPRVYNCLKRSNINTFLELLNNSQEELMKIQDFRIEDVKHILDVLEI.

Belongs to the RNA polymerase alpha chain family. As to quaternary structure, in plastids the minimal PEP RNA polymerase catalytic core is composed of four subunits: alpha, beta, beta', and beta''. When a (nuclear-encoded) sigma factor is associated with the core the holoenzyme is formed, which can initiate transcription.

The protein resides in the plastid. It localises to the chloroplast. The catalysed reaction is RNA(n) + a ribonucleoside 5'-triphosphate = RNA(n+1) + diphosphate. DNA-dependent RNA polymerase catalyzes the transcription of DNA into RNA using the four ribonucleoside triphosphates as substrates. The chain is DNA-directed RNA polymerase subunit alpha from Morus indica (Mulberry).